The chain runs to 283 residues: Protein/nucleic acid deglycase HchA (283 aa).

Zn(2+) is bound by residues His86, Glu91, and His123. The active-site Nucleophile is the Cys185.

Belongs to the peptidase C56 family. HchA subfamily. In terms of assembly, homodimer.

It is found in the cytoplasm. The catalysed reaction is N(omega)-(1-hydroxy-2-oxopropyl)-L-arginyl-[protein] + H2O = lactate + L-arginyl-[protein] + H(+). The enzyme catalyses N(6)-(1-hydroxy-2-oxopropyl)-L-lysyl-[protein] + H2O = lactate + L-lysyl-[protein] + H(+). It catalyses the reaction S-(1-hydroxy-2-oxopropyl)-L-cysteinyl-[protein] + H2O = lactate + L-cysteinyl-[protein] + H(+). It carries out the reaction N(omega)-(1-hydroxy-2-oxoethyl)-L-arginyl-[protein] + H2O = L-arginyl-[protein] + glycolate + H(+). The catalysed reaction is N(6)-(1-hydroxy-2-oxoethyl)-L-lysyl-[protein] + H2O = glycolate + L-lysyl-[protein] + H(+). The enzyme catalyses S-(1-hydroxy-2-oxoethyl)-L-cysteinyl-[protein] + H2O = glycolate + L-cysteinyl-[protein] + H(+). It catalyses the reaction N(2)-(1-hydroxy-2-oxopropyl)-dGTP + H2O = lactate + dGTP + H(+). It carries out the reaction N(2)-(1-hydroxy-2-oxopropyl)-GTP + H2O = lactate + GTP + H(+). The catalysed reaction is N(2)-(1-hydroxy-2-oxopropyl)-GDP + H2O = lactate + GDP + H(+). The enzyme catalyses N(2)-(1-hydroxy-2-oxopropyl)-GMP + H2O = lactate + GMP + H(+). It catalyses the reaction N(2)-(1-hydroxy-2-oxoethyl)-dGTP + H2O = dGTP + glycolate + H(+). It carries out the reaction N(2)-(1-hydroxy-2-oxoethyl)-GTP + H2O = glycolate + GTP + H(+). The catalysed reaction is N(2)-(1-hydroxy-2-oxoethyl)-GDP + H2O = glycolate + GDP + H(+). The enzyme catalyses N(2)-(1-hydroxy-2-oxoethyl)-GMP + H2O = glycolate + GMP + H(+). It catalyses the reaction an N(2)-(1-hydroxy-2-oxopropyl)-guanosine in RNA + H2O = a guanosine in RNA + lactate + H(+). It carries out the reaction an N(2)-(1-hydroxy-2-oxopropyl)-2'-deoxyguanosine in DNA + H2O = a 2'-deoxyguanosine in DNA + lactate + H(+). The catalysed reaction is an N(2)-(1-hydroxy-2-oxoethyl)-guanosine in RNA + H2O = a guanosine in RNA + glycolate + H(+). The enzyme catalyses an N(2)-(1-hydroxy-2-oxoethyl)-2'-deoxyguanosine in DNA + H2O = a 2'-deoxyguanosine in DNA + glycolate + H(+). Functionally, protein and nucleotide deglycase that catalyzes the deglycation of the Maillard adducts formed between amino groups of proteins or nucleotides and reactive carbonyl groups of glyoxals. Thus, functions as a protein deglycase that repairs methylglyoxal- and glyoxal-glycated proteins, and releases repaired proteins and lactate or glycolate, respectively. Deglycates cysteine, arginine and lysine residues in proteins, and thus reactivates these proteins by reversing glycation by glyoxals. Acts on early glycation intermediates (hemithioacetals and aminocarbinols), preventing the formation of Schiff bases and advanced glycation endproducts (AGE). Also functions as a nucleotide deglycase able to repair glycated guanine in the free nucleotide pool (GTP, GDP, GMP, dGTP) and in DNA and RNA. Is thus involved in a major nucleotide repair system named guanine glycation repair (GG repair), dedicated to reversing methylglyoxal and glyoxal damage via nucleotide sanitization and direct nucleic acid repair. Plays an important role in protecting cells from carbonyl stress. This chain is Protein/nucleic acid deglycase HchA, found in Escherichia coli O8 (strain IAI1).